Reading from the N-terminus, the 327-residue chain is DNA-directed RNA polymerase subunit alpha (327 aa).

The interval 1–233 is alpha N-terminal domain (alpha-NTD); it reads MVREKVKVST…NLFIPFLHVE (233 aa). The segment at 267 to 327 is alpha C-terminal domain (alpha-CTD); sequence LAFQYIFIDQ…KKILDILEKK (61 aa).

It belongs to the RNA polymerase alpha chain family. As to quaternary structure, in plastids the minimal PEP RNA polymerase catalytic core is composed of four subunits: alpha, beta, beta', and beta''. When a (nuclear-encoded) sigma factor is associated with the core the holoenzyme is formed, which can initiate transcription.

The protein resides in the plastid. It is found in the chloroplast. The enzyme catalyses RNA(n) + a ribonucleoside 5'-triphosphate = RNA(n+1) + diphosphate. Its function is as follows. DNA-dependent RNA polymerase catalyzes the transcription of DNA into RNA using the four ribonucleoside triphosphates as substrates. This Lepidium virginicum (Virginia pepperweed) protein is DNA-directed RNA polymerase subunit alpha.